Here is a 469-residue protein sequence, read N- to C-terminus: Acetyl-CoA decarbonylase/synthase complex subunit beta 1 (469 aa).

Cys189, Cys192, Cys278, and Cys280 together coordinate [Ni-Fe-S] cluster.

Belongs to the CdhC family. Monomer. The ACDS complex is made up of alpha, epsilon, beta, gamma and delta chains with a probable stoichiometry of (alpha(2)epsilon(2))(4)-beta(8)-(gamma(1)delta(1))(8) (Potential). [Ni-Fe-S] cluster is required as a cofactor.

It carries out the reaction Co(I)-[corrinoid Fe-S protein] + acetyl-CoA + H(+) = methyl-Co(III)-[corrinoid Fe-S protein] + CO + CoA. Its pathway is one-carbon metabolism; methanogenesis from acetate. Part of a complex that catalyzes the reversible cleavage of acetyl-CoA, allowing growth on acetate as sole source of carbon and energy. The alpha-epsilon complex generates CO from CO(2), while the beta subunit (this protein) combines the CO with CoA and a methyl group to form acetyl-CoA. The methyl group, which is incorporated into acetyl-CoA, is transferred to the beta subunit by a corrinoid iron-sulfur protein (the gamma-delta complex). This is Acetyl-CoA decarbonylase/synthase complex subunit beta 1 (cdhC1) from Methanosarcina thermophila.